The following is a 194-amino-acid chain: Cytochrome c oxidase assembly protein CtaG (194 aa).

Residues 1-12 are Cytoplasmic-facing; that stretch reads MALRGPAKTVAQ. Residues 13–35 form a helical; Signal-anchor for type II membrane protein membrane-spanning segment; sequence TVSVVIFMGALAWASVPLYDWFC. At 36–194 the chain is on the periplasmic side; it reads RVTGFGGVTG…IEENSDTSLN (159 aa).

This sequence belongs to the COX11/CtaG family.

It is found in the cell inner membrane. Exerts its effect at some terminal stage of cytochrome c oxidase synthesis, probably by being involved in the insertion of the copper B into subunit I. This is Cytochrome c oxidase assembly protein CtaG from Roseobacter denitrificans (strain ATCC 33942 / OCh 114) (Erythrobacter sp. (strain OCh 114)).